A 154-amino-acid chain; its full sequence is Lipoprotein signal peptidase (154 aa).

The next 2 helical transmembrane spans lie at 55–75 (GHMW…IYIM) and 84–104 (LFSI…IDRI). Active-site residues include Asp-111 and Asp-129. The helical transmembrane segment at 124–144 (IFNVADAALSVGVVLMLVYVF) threads the bilayer.

It belongs to the peptidase A8 family.

The protein resides in the cell membrane. It catalyses the reaction Release of signal peptides from bacterial membrane prolipoproteins. Hydrolyzes -Xaa-Yaa-Zaa-|-(S,diacylglyceryl)Cys-, in which Xaa is hydrophobic (preferably Leu), and Yaa (Ala or Ser) and Zaa (Gly or Ala) have small, neutral side chains.. It functions in the pathway protein modification; lipoprotein biosynthesis (signal peptide cleavage). Its function is as follows. This protein specifically catalyzes the removal of signal peptides from prolipoproteins. This Listeria innocua serovar 6a (strain ATCC BAA-680 / CLIP 11262) protein is Lipoprotein signal peptidase.